A 33-amino-acid chain; its full sequence is Toxin Bcg III 25.52 (33 aa).

An intrachain disulfide couples Cys-6 to Cys-28.

The protein resides in the secreted. It is found in the nematocyst. This chain is Toxin Bcg III 25.52, found in Bunodosoma cangicum (Sea anemone).